The following is a 118-amino-acid chain: Large ribosomal subunit protein bL19 (118 aa).

It belongs to the bacterial ribosomal protein bL19 family.

This protein is located at the 30S-50S ribosomal subunit interface and may play a role in the structure and function of the aminoacyl-tRNA binding site. In Helicobacter pylori (strain HPAG1), this protein is Large ribosomal subunit protein bL19.